We begin with the raw amino-acid sequence, 528 residues long: Chromosomal replication initiator protein DnaA (528 aa).

Residues 1-104 (MNDDPNALAR…PVDDEPESDP (104 aa)) form a domain I, interacts with DnaA modulators region. The tract at residues 95-158 (PVDDEPESDP…TDFEEVDDDR (64 aa)) is disordered. Basic and acidic residues predominate over residues 104–123 (PPSRDHRPEPEPLHTPRHLE). Positions 105 to 187 (PSRDHRPEPE…GPAPSATGGN (83 aa)) are domain II. Over residues 149–158 (TDFEEVDDDR) the composition is skewed to acidic residues. Residues 188–404 (SLNAKYTFDT…GALIRVTAFA (217 aa)) form a domain III, AAA+ region region. ATP is bound by residues Gly232, Gly234, Lys235, and Thr236. The domain IV, binds dsDNA stretch occupies residues 405 to 528 (SLNRQPLDLT…TARIKQRSKR (124 aa)).

Belongs to the DnaA family. In terms of assembly, oligomerizes as a right-handed, spiral filament on DNA at oriC.

It is found in the cytoplasm. Plays an essential role in the initiation and regulation of chromosomal replication. ATP-DnaA binds to the origin of replication (oriC) to initiate formation of the DNA replication initiation complex once per cell cycle. Binds the DnaA box (a 9 base pair repeat at the origin) and separates the double-stranded (ds)DNA. Forms a right-handed helical filament on oriC DNA; dsDNA binds to the exterior of the filament while single-stranded (ss)DNA is stabiized in the filament's interior. The ATP-DnaA-oriC complex binds and stabilizes one strand of the AT-rich DNA unwinding element (DUE), permitting loading of DNA polymerase. After initiation quickly degrades to an ADP-DnaA complex that is not apt for DNA replication. Binds acidic phospholipids. In Rhodococcus jostii (strain RHA1), this protein is Chromosomal replication initiator protein DnaA.